Reading from the N-terminus, the 281-residue chain is Nucleotide-binding protein DNO_0399 (281 aa).

6 to 13 contacts ATP; that stretch reads GMSGAGKS. 55 to 58 contributes to the GTP binding site; it reads DARN.

This sequence belongs to the RapZ-like family.

Its function is as follows. Displays ATPase and GTPase activities. This Dichelobacter nodosus (strain VCS1703A) protein is Nucleotide-binding protein DNO_0399.